The chain runs to 428 residues: 3-phosphoshikimate 1-carboxyvinyltransferase (428 aa).

3-phosphoshikimate is bound by residues Lys-20, Ser-21, and Arg-25. Phosphoenolpyruvate is bound at residue Lys-20. Phosphoenolpyruvate contacts are provided by Gly-92 and Arg-120. 3-phosphoshikimate-binding residues include Ser-166, Gln-168, Asp-314, and Lys-341. Gln-168 is a binding site for phosphoenolpyruvate. The active-site Proton acceptor is Asp-314. Phosphoenolpyruvate is bound by residues Arg-345 and Arg-387.

This sequence belongs to the EPSP synthase family. Monomer.

It localises to the cytoplasm. It carries out the reaction 3-phosphoshikimate + phosphoenolpyruvate = 5-O-(1-carboxyvinyl)-3-phosphoshikimate + phosphate. It functions in the pathway metabolic intermediate biosynthesis; chorismate biosynthesis; chorismate from D-erythrose 4-phosphate and phosphoenolpyruvate: step 6/7. Catalyzes the transfer of the enolpyruvyl moiety of phosphoenolpyruvate (PEP) to the 5-hydroxyl of shikimate-3-phosphate (S3P) to produce enolpyruvyl shikimate-3-phosphate and inorganic phosphate. In Listeria welshimeri serovar 6b (strain ATCC 35897 / DSM 20650 / CCUG 15529 / CIP 8149 / NCTC 11857 / SLCC 5334 / V8), this protein is 3-phosphoshikimate 1-carboxyvinyltransferase.